Here is a 72-residue protein sequence, read N- to C-terminus: Translation initiation factor IF-1 (72 aa).

Positions 1 to 72 (MSKEDAIEVM…TRGRIVYRYK (72 aa)) constitute an S1-like domain.

This sequence belongs to the IF-1 family. As to quaternary structure, component of the 30S ribosomal translation pre-initiation complex which assembles on the 30S ribosome in the order IF-2 and IF-3, IF-1 and N-formylmethionyl-tRNA(fMet); mRNA recruitment can occur at any time during PIC assembly.

It is found in the cytoplasm. Its function is as follows. One of the essential components for the initiation of protein synthesis. Stabilizes the binding of IF-2 and IF-3 on the 30S subunit to which N-formylmethionyl-tRNA(fMet) subsequently binds. Helps modulate mRNA selection, yielding the 30S pre-initiation complex (PIC). Upon addition of the 50S ribosomal subunit IF-1, IF-2 and IF-3 are released leaving the mature 70S translation initiation complex. The polypeptide is Translation initiation factor IF-1 (Koribacter versatilis (strain Ellin345)).